We begin with the raw amino-acid sequence, 584 residues long: Cationic amino acid transporter 7, chloroplastic (584 aa).

Residues 1-49 constitute a chloroplast transit peptide; sequence MEAQYRNHDGDTSFSSLRVYLNSLSDTPSRFSRRAVSVSTSYDEMSRVR. The next 14 helical transmembrane spans lie at 62–82, 90–110, 131–151, 185–205, 214–234, 254–274, 293–313, 346–366, 396–416, 417–437, 449–469, 480–500, 508–528, and 540–560; these read WYDLIGLGIGGMIGAGVFVTT, AGPSIVVSYAIAGLCALLSAF, ITFGEFPAFITGANLIMDYVL, GFNEIDPIAVIVVLAVTFVIC, VNMVLTALHIAFIVFVIVMGF, FFPFGVSGVFNGAAMVYLSYI, IPMGISGSVAIVIVLYCLMAI, VVGIGASFGILTSLIVAMLGQ, ASAFLGIFTAVLALFTDLNVL, LNLVSIGTLFVFYMVANAVIF, WPTLSFLCLFSITSILFTLVW, FILGASTVTAIAIVQIFHCVV, FWGVPLMPWTPCVSIFLNIFL, and FGFFSGLVVLVYVFYSVHASY.

It belongs to the amino acid-polyamine-organocation (APC) superfamily. Cationic amino acid transporter (CAT) (TC 2.A.3.3) family.

It localises to the plastid. Its subcellular location is the chloroplast membrane. Its function is as follows. Permease involved in the transport of the cationic amino acids. The chain is Cationic amino acid transporter 7, chloroplastic (CAT7) from Arabidopsis thaliana (Mouse-ear cress).